Here is a 340-residue protein sequence, read N- to C-terminus: MLKRKLGPEDLRRLETPAIERESHGQTSAKSSVPDSASTVAVDFAGVTKSYGNKIVVDELSFSVASGECFGLLGPNGAGKSTIARMLLGMTCPDAGTITVLGVPVPARARLARRGIGVVPQFDNLDQEFTVRENLLVFGRYFGMSTRQSEAVIPSLLEFARLERKADARVSELSGGMKRCLTMARALINDPQLIVMDEPTTGLDPHARHLIWERLRALLARGKTIILTTHFMEEAERLCDRLCVLEKGRNIAEGGPQALIDEHIGCQVMEIYGGDPHELLSLVKPHSQRIEVSGETLYCYAPDPDQVRTQLQGRAGLRLLLRPANLEDVFLRLTGREMEE.

Residues 1 to 24 are compositionally biased toward basic and acidic residues; the sequence is MLKRKLGPEDLRRLETPAIERESH. The tract at residues 1-34 is disordered; sequence MLKRKLGPEDLRRLETPAIERESHGQTSAKSSVP. A compositionally biased stretch (polar residues) spans 25-34; it reads GQTSAKSSVP. Residues 42–272 enclose the ABC transporter domain; the sequence is VDFAGVTKSY…HIGCQVMEIY (231 aa). 74 to 81 is a binding site for ATP; it reads GPNGAGKS.

The protein belongs to the ABC transporter superfamily. Lipooligosaccharide exporter (TC 3.A.1.102) family. As to quaternary structure, the complex is composed of two ATP-binding proteins (NodI) and two transmembrane proteins (NodJ).

The protein resides in the cell inner membrane. Functionally, part of the ABC transporter complex NodIJ involved in the export of the nodulation factors (Nod factors), the bacterial signal molecules that induce symbiosis and subsequent nodulation induction. Nod factors are LCO (lipo-chitin oligosaccharide), a modified beta-1,4-linked N-acetylglucosamine oligosaccharide. This subunit is responsible for energy coupling to the transport system. This Mesorhizobium japonicum (strain LMG 29417 / CECT 9101 / MAFF 303099) (Mesorhizobium loti (strain MAFF 303099)) protein is Nod factor export ATP-binding protein I.